The sequence spans 213 residues: MTDKPHQCVIIGIAGASASGKSLIASTLYRELCYQVGDEHIGIISEGSYYKDQSGMTMTERVKTNYDHPSAMDHSLLFQYIQMLKAGLPIEMPVYSYVEHTRRPETLHLRPKKVIILEEILLLTDLRLRQEMNLSIFVDTPLDICLMRRMKRDVNERGRSMDSVIGEYQRTVRPMFLQFIEPSKQYADIIVPRGGKNRIAIDILKAKISQFFE.

Residue 15–22 (GASASGKS) coordinates ATP.

The protein belongs to the uridine kinase family.

Its subcellular location is the cytoplasm. The enzyme catalyses uridine + ATP = UMP + ADP + H(+). It carries out the reaction cytidine + ATP = CMP + ADP + H(+). The protein operates within pyrimidine metabolism; CTP biosynthesis via salvage pathway; CTP from cytidine: step 1/3. It participates in pyrimidine metabolism; UMP biosynthesis via salvage pathway; UMP from uridine: step 1/1. This is Uridine kinase from Sodalis glossinidius (strain morsitans).